The following is a 306-amino-acid chain: Secreted RxLR effector protein 76 (306 aa).

An N-terminal signal peptide occupies residues 1–21 (MSGAFYVFTALLLVASDQIAA). Residues 48-65 (RFLRGSRDEPDNLANEER) carry the RxLR-dEER motif. A disordered region spans residues 105-142 (AAKAVKKRPRGAKAGRKMPRAAEAEAVKKVPRAGTAVK). The span at 107–123 (KAVKKRPRGAKAGRKMP) shows a compositional bias: basic residues.

Belongs to the RxLR effector family.

It localises to the secreted. The protein localises to the host nucleus. Secreted effector that partially suppresses the host cell death induced by cell death-inducing proteins. This Plasmopara viticola (Downy mildew of grapevine) protein is Secreted RxLR effector protein 76.